The chain runs to 131 residues: Small ribosomal subunit protein uS8 (131 aa).

The protein belongs to the universal ribosomal protein uS8 family. In terms of assembly, part of the 30S ribosomal subunit. Contacts proteins S5 and S12.

In terms of biological role, one of the primary rRNA binding proteins, it binds directly to 16S rRNA central domain where it helps coordinate assembly of the platform of the 30S subunit. The polypeptide is Small ribosomal subunit protein uS8 (Hyphomonas neptunium (strain ATCC 15444)).